A 167-amino-acid chain; its full sequence is Phosphopantetheine adenylyltransferase (167 aa).

Thr10 contacts substrate. ATP contacts are provided by residues 10–11 and His18; that span reads TF. Substrate is bound by residues Ala77 and Arg91. Residues 92–94, Glu102, and 127–133 each bind ATP; these read GLR and YSFISSS.

This sequence belongs to the bacterial CoaD family. As to quaternary structure, homohexamer. Mg(2+) is required as a cofactor.

The protein resides in the cytoplasm. The catalysed reaction is (R)-4'-phosphopantetheine + ATP + H(+) = 3'-dephospho-CoA + diphosphate. The protein operates within cofactor biosynthesis; coenzyme A biosynthesis; CoA from (R)-pantothenate: step 4/5. Its function is as follows. Reversibly transfers an adenylyl group from ATP to 4'-phosphopantetheine, yielding dephospho-CoA (dPCoA) and pyrophosphate. The polypeptide is Phosphopantetheine adenylyltransferase (Thermomicrobium roseum (strain ATCC 27502 / DSM 5159 / P-2)).